The primary structure comprises 636 residues: Probable potassium transport system protein Kup (636 aa).

Transmembrane regions (helical) follow at residues 23 to 43, 57 to 77, 111 to 131, 148 to 168, 179 to 199, 217 to 237, 258 to 278, 287 to 307, 348 to 368, 377 to 397, 409 to 429, and 431 to 451; these read MALMLGALGVVYGDIGTSPLY, PAHVLGVLSILFWLLMIVVSL, WLLIVLGIFGAALFYGDSMIT, HTLEPWVVPVALVVLVALFAI, LFGPIMALWFATLAVLGGYQI, FIAEFPVMSFLLLGAVVLALT, WFAMVLPALTLCYFGQGALLL, PFFLMAPEWGLAALVGLATVA, IYLPQVNALLLCAVLVLVLLF, AYGFAVTGTMLTTSVLAFAVL, WMVLLGALLVIDILLFGANIF, and IHEGGWLPLLVGVVVFTLMMT.

This sequence belongs to the HAK/KUP transporter (TC 2.A.72) family.

It is found in the cell inner membrane. It catalyses the reaction K(+)(in) + H(+)(in) = K(+)(out) + H(+)(out). Functionally, transport of potassium into the cell. Likely operates as a K(+):H(+) symporter. This is Probable potassium transport system protein Kup from Bordetella bronchiseptica (strain ATCC BAA-588 / NCTC 13252 / RB50) (Alcaligenes bronchisepticus).